The sequence spans 264 residues: uncharacterized protein (264 aa).

Composition is skewed to polar residues over residues 1–18 (MFENLNTALTPKLQSSRS), 73–83 (SLGSVGTTEVN), and 126–139 (KTTQDMLISSQPVL). Disordered regions lie at residues 1–47 (MFEN…WVGS) and 68–264 (RKEP…LSFE). Low complexity predominate over residues 149–171 (SSGQPQVSSSAQPSPADASQPEA). The segment covering 194 to 212 (LIHKDGQDDPKLKVTECRR) has biased composition (basic and acidic residues). Phosphoserine occurs at positions 214, 215, 241, and 250.

This is an uncharacterized protein from Bos taurus (Bovine).